Here is a 345-residue protein sequence, read N- to C-terminus: Phosphate acyltransferase (345 aa).

This sequence belongs to the PlsX family. Homodimer. Probably interacts with PlsY.

The protein resides in the cytoplasm. It catalyses the reaction a fatty acyl-[ACP] + phosphate = an acyl phosphate + holo-[ACP]. The protein operates within lipid metabolism; phospholipid metabolism. In terms of biological role, catalyzes the reversible formation of acyl-phosphate (acyl-PO(4)) from acyl-[acyl-carrier-protein] (acyl-ACP). This enzyme utilizes acyl-ACP as fatty acyl donor, but not acyl-CoA. The chain is Phosphate acyltransferase from Anaplasma phagocytophilum (strain HZ).